A 193-amino-acid polypeptide reads, in one-letter code: Iron-sulfur flavoprotein MJ1083 (193 aa).

[4Fe-4S] cluster is bound by residues cysteine 47, cysteine 50, cysteine 53, and cysteine 59.

This sequence belongs to the SsuE family. Isf subfamily. As to quaternary structure, homodimer. Requires FMN as cofactor. The cofactor is [4Fe-4S] cluster.

Redox-active protein probably involved in electron transport. This is Iron-sulfur flavoprotein MJ1083 from Methanocaldococcus jannaschii (strain ATCC 43067 / DSM 2661 / JAL-1 / JCM 10045 / NBRC 100440) (Methanococcus jannaschii).